We begin with the raw amino-acid sequence, 285 residues long: Probable endonuclease 4 (285 aa).

Zn(2+)-binding residues include H69, H109, E145, D179, H182, H216, D229, H231, and E261.

This sequence belongs to the AP endonuclease 2 family. Zn(2+) serves as cofactor.

It carries out the reaction Endonucleolytic cleavage to 5'-phosphooligonucleotide end-products.. In terms of biological role, endonuclease IV plays a role in DNA repair. It cleaves phosphodiester bonds at apurinic or apyrimidinic (AP) sites, generating a 3'-hydroxyl group and a 5'-terminal sugar phosphate. This chain is Probable endonuclease 4, found in Salmonella dublin (strain CT_02021853).